The chain runs to 56 residues: Ovomucoid (56 aa).

Residues 6 to 56 (VDCSEYPKPDCTLEYRPLCGSDNKTYASKCNFCNAVVESNGTLTLSHFGKC) enclose the Kazal-like domain. 3 disulfides stabilise this stretch: Cys8/Cys38, Cys16/Cys35, and Cys24/Cys56. An N-linked (GlcNAc...) asparagine glycan is attached at Asn45.

Its subcellular location is the secreted. In Callipepla squamata pallida (Blue scaled quail), this protein is Ovomucoid.